Reading from the N-terminus, the 116-residue chain is Holo-[acyl-carrier-protein] synthase (116 aa).

The Mg(2+) site is built by Asp5 and Glu50.

The protein belongs to the P-Pant transferase superfamily. AcpS family. Requires Mg(2+) as cofactor.

It is found in the cytoplasm. It catalyses the reaction apo-[ACP] + CoA = holo-[ACP] + adenosine 3',5'-bisphosphate + H(+). Functionally, transfers the 4'-phosphopantetheine moiety from coenzyme A to a Ser of acyl-carrier-protein. The protein is Holo-[acyl-carrier-protein] synthase of Nitratiruptor sp. (strain SB155-2).